The chain runs to 2093 residues: Nuclear-pore anchor (2093 aa).

4 coiled-coil regions span residues 57 to 362 (LEQK…TDEL), 439 to 529 (MILQ…RDVQ), 570 to 627 (DING…RAEE), and 688 to 1172 (QEKA…LEAK). Residues 1175 to 1198 (NSAEKNSRSGTISSGSTDSDHLED) are disordered. Residues 1182-1191 (RSGTISSGST) show a composition bias toward low complexity. 2 coiled-coil regions span residues 1208-1252 (LRRT…AERA) and 1293-1585 (EKCQ…LKHA). Disordered regions lie at residues 1453–1489 (YEKE…AVVE), 1525–1555 (KKDE…KKEK), and 1627–2093 (SNSQ…PSPP). Over residues 1470 to 1483 (QLEEAKEEAGKRTT) the composition is skewed to basic and acidic residues. Residues 1652–1674 (STMTRVPSSTPLIKSPVATTQQL) are compositionally biased toward polar residues. Composition is skewed to basic and acidic residues over residues 1710–1719 (KPEESPKVDV) and 1729–1740 (DEGKQPAAHEPE). Over residues 1764–1779 (SEPQQDSLTQGETSSE) the composition is skewed to polar residues. Residues 1789 to 1808 (KGSESHPDTSEGENLAKEPA) are compositionally biased toward basic and acidic residues. A coiled-coil region spans residues 1818 to 1849 (TTDGDNEETEAENAEEKTEEYVEAQQDNEADE). Composition is skewed to acidic residues over residues 1821-1830 (GDNEETEAEN) and 1838-1903 (YVEA…EEGT). A compositionally biased stretch (polar residues) spans 1921 to 1931 (TLATPTQSPSR). Over residues 1935–1963 (AMEEAETTIETPVEDDKTDEGGDAAEEAA) the composition is skewed to acidic residues. The span at 1984–2009 (TSAATTSPVSTAPTTSSTLASAITSS) shows a compositional bias: low complexity. Position 2022 is a phosphoserine (Ser2022).

Part of the nuclear pore complex (NPC). The NPC has an eight-fold symmetrical structure comprising a central transport channel and two rings, the cytoplasmic and nuclear rings, to which eight filaments are attached. The cytoplasmic filaments have loose ends, while the nuclear filaments are joined in a distal ring, forming a nuclear basket. NPCs are highly dynamic in configuration and composition, and can be devided in 3 subcomplexes, the NUP62 subcomplex, the NUP107-160 subcomplex and the NUP93 subcomplex, containing approximately 30 different nucleoporin proteins. Interacts with MAD1 and (via N-terminus) with ESD4. In terms of tissue distribution, ubiquitous. Highest expression in the shoot apical region.

The protein resides in the nucleus envelope. It is found in the nucleus membrane. The protein localises to the nucleus. It localises to the nuclear pore complex. Component of the nuclear pore complex. Acts as a docking site for activities required for desumoylation and mRNA export. Required for the proper expression or localization of a subset of miRNAs. Plays a role in meristematic cell division by interacting with spindle assembly checkpoint proteins. The chain is Nuclear-pore anchor from Arabidopsis thaliana (Mouse-ear cress).